Consider the following 595-residue polypeptide: S-(+)-linalool synthase, chloroplastic (595 aa).

The N-terminal 46 residues, 1–46, are a transit peptide targeting the chloroplast; it reads MVCHVFSSFSSSLIRVLEAPLLLPAASASSSSSSSPASRSGGRRRR. Over residues 27 to 40 the composition is skewed to low complexity; that stretch reads SASSSSSSSPASRS. A disordered region spans residues 27 to 54; that stretch reads SASSSSSSSPASRSGGRRRRAAHVRPSP. Positions 309, 346, 350, 487, and 490 each coordinate (2E)-geranyl diphosphate. The Mg(2+) site is built by aspartate 346 and aspartate 350. The DDXXD motif signature appears at 346–350; it reads DDIFD. Mg(2+) contacts are provided by aspartate 490, serine 494, and glutamate 498.

The protein belongs to the terpene synthase family. Tpsb subfamily. Mg(2+) is required as a cofactor. Mn(2+) serves as cofactor.

The protein resides in the plastid. It localises to the chloroplast. It carries out the reaction (2E)-geranyl diphosphate + H2O = (S)-linalool + diphosphate. It functions in the pathway secondary metabolite biosynthesis; terpenoid biosynthesis. Functionally, involved in monoterpene (C10) biosynthesis. The major product is S-(+)-linalool. Linalool production is induced by jasmonate in response to pathogen attack, it possesses antibacterial activity and is important for resistance to the bacterial blight pathogen Xanthomonas oryzae pv. oryzae (Xoo). Plants over-expressing linalool synthase display enhanced resistance to Xoo. This chain is S-(+)-linalool synthase, chloroplastic, found in Oryza sativa subsp. japonica (Rice).